Reading from the N-terminus, the 502-residue chain is Nostrin (502 aa).

Positions 1–260 constitute an F-BAR domain; it reads MRDPLTDCSY…AISKVDVEKD (260 aa). Residue serine 114 is modified to Phosphoserine. 2 coiled-coil regions span residues 160-230 and 305-335; these read SMTQ…LNQY and KLWR…SSAS. Residues 292–372 form the REM-1 domain; sequence PMDKERRKSL…SYKLSTVLAD (81 aa). Residues 413–437 form a disordered region; it reads KAESKAPAGEQNNPSSSRPGSSVSQ. Low complexity predominate over residues 423 to 437; it reads QNNPSSSRPGSSVSQ. In terms of domain architecture, SH3 spans 438–497; the sequence is GNNQLCKALYTFQARQDDELNLEKGDIVTIHEKKEEGWWFGSLNGKKGHFPAAYVEELPP. Serine 479 is subject to Phosphoserine.

As to quaternary structure, homotrimer. Interacts with DAB2. Interacts with NOS3, WASL and CAV1. Interacts (via SH3 domain) with DNM2; this interaction allows the recruitment of NOS3 to dynamin-positive structures. Over-expressed in brain microcapillaries from spontaneously hypertensive rats.

Its subcellular location is the cell membrane. The protein localises to the cytoplasmic vesicle. The protein resides in the cytoplasm. It localises to the cytoskeleton. It is found in the nucleus. In terms of biological role, multivalent adapter protein which may decrease NOS3 activity by inducing its translocation away from the plasma membrane. The protein is Nostrin of Rattus norvegicus (Rat).